The chain runs to 327 residues: Phenylalanine--tRNA ligase alpha subunit (327 aa).

Mg(2+) is bound at residue glutamate 252.

It belongs to the class-II aminoacyl-tRNA synthetase family. Phe-tRNA synthetase alpha subunit type 1 subfamily. Tetramer of two alpha and two beta subunits. Requires Mg(2+) as cofactor.

Its subcellular location is the cytoplasm. The catalysed reaction is tRNA(Phe) + L-phenylalanine + ATP = L-phenylalanyl-tRNA(Phe) + AMP + diphosphate + H(+). This Yersinia pestis bv. Antiqua (strain Angola) protein is Phenylalanine--tRNA ligase alpha subunit.